The sequence spans 460 residues: Chromosomal replication initiator protein DnaA (460 aa).

Residues 1-84 (MAVSLWQQCI…RFDIGSRPSA (84 aa)) form a domain I, interacts with DnaA modulators region. The interval 84 to 123 (AKKPEPAPVAAVRVPNPQTKASVGTSFNTTEPVANTNHRS) is domain II. A disordered region spans residues 103–123 (KASVGTSFNTTEPVANTNHRS). A domain III, AAA+ region region spans residues 124-340 (NINPTYQFDN…GALNRVIANA (217 aa)). Residues glycine 168, glycine 170, lysine 171, and threonine 172 each coordinate ATP. The segment at 341 to 460 (NFTGRPITID…YANLIRTLSS (120 aa)) is domain IV, binds dsDNA.

The protein belongs to the DnaA family. Oligomerizes as a right-handed, spiral filament on DNA at oriC.

The protein resides in the cytoplasm. In terms of biological role, plays an essential role in the initiation and regulation of chromosomal replication. ATP-DnaA binds to the origin of replication (oriC) to initiate formation of the DNA replication initiation complex once per cell cycle. Binds the DnaA box (a 9 base pair repeat at the origin) and separates the double-stranded (ds)DNA. Forms a right-handed helical filament on oriC DNA; dsDNA binds to the exterior of the filament while single-stranded (ss)DNA is stabiized in the filament's interior. The ATP-DnaA-oriC complex binds and stabilizes one strand of the AT-rich DNA unwinding element (DUE), permitting loading of DNA polymerase. After initiation quickly degrades to an ADP-DnaA complex that is not apt for DNA replication. Binds acidic phospholipids. This Shewanella sp. (strain MR-4) protein is Chromosomal replication initiator protein DnaA.